The following is a 139-amino-acid chain: D-ribose pyranase (139 aa).

Histidine 20 acts as the Proton donor in catalysis. Substrate is bound by residues aspartate 28, histidine 106, and 128–130; that span reads YAN.

Belongs to the RbsD / FucU family. RbsD subfamily. As to quaternary structure, homodecamer.

The protein localises to the cytoplasm. It catalyses the reaction beta-D-ribopyranose = beta-D-ribofuranose. It participates in carbohydrate metabolism; D-ribose degradation; D-ribose 5-phosphate from beta-D-ribopyranose: step 1/2. Functionally, catalyzes the interconversion of beta-pyran and beta-furan forms of D-ribose. The protein is D-ribose pyranase of Histophilus somni (strain 2336) (Haemophilus somnus).